The primary structure comprises 147 residues: D-aminoacyl-tRNA deacylase (147 aa).

A Gly-cisPro motif, important for rejection of L-amino acids motif is present at residues 138–139 (GP).

The protein belongs to the DTD family. As to quaternary structure, homodimer.

It localises to the cytoplasm. It carries out the reaction glycyl-tRNA(Ala) + H2O = tRNA(Ala) + glycine + H(+). The catalysed reaction is a D-aminoacyl-tRNA + H2O = a tRNA + a D-alpha-amino acid + H(+). Functionally, an aminoacyl-tRNA editing enzyme that deacylates mischarged D-aminoacyl-tRNAs. Also deacylates mischarged glycyl-tRNA(Ala), protecting cells against glycine mischarging by AlaRS. Acts via tRNA-based rather than protein-based catalysis; rejects L-amino acids rather than detecting D-amino acids in the active site. By recycling D-aminoacyl-tRNA to D-amino acids and free tRNA molecules, this enzyme counteracts the toxicity associated with the formation of D-aminoacyl-tRNA entities in vivo and helps enforce protein L-homochirality. This chain is D-aminoacyl-tRNA deacylase, found in Prosthecochloris aestuarii (strain DSM 271 / SK 413).